An 832-amino-acid polypeptide reads, in one-letter code: Translation initiation factor IF-2 (832 aa).

Residues 1 to 10 show a composition bias toward basic and acidic residues; that stretch reads MLMSDVEKFG. Disordered regions lie at residues 1–87, 120–148, and 163–201; these read MLMS…SRSA, RDEE…PAAA, and IAPG…GGGG. A compositionally biased stretch (gly residues) spans 11–20; the sequence is GDCGSSGGSG. Composition is skewed to polar residues over residues 29–42 and 71–87; these read RAST…STGG and SPYT…SRSA. The tr-type G domain maps to 331-500; the sequence is PRPPVVTVMG…LLLAEMLELR (170 aa). The interval 340–347 is G1; that stretch reads GHVDHGKT. 340 to 347 contributes to the GTP binding site; sequence GHVDHGKT. Residues 365–369 form a G2 region; the sequence is GITQH. The segment at 386-389 is G3; it reads DTPG. GTP is bound by residues 386 to 390 and 440 to 443; these read DTPGH and NKID. The segment at 440 to 443 is G4; it reads NKID. The interval 476–478 is G5; it reads SAK.

The protein belongs to the TRAFAC class translation factor GTPase superfamily. Classic translation factor GTPase family. IF-2 subfamily.

The protein localises to the cytoplasm. One of the essential components for the initiation of protein synthesis. Protects formylmethionyl-tRNA from spontaneous hydrolysis and promotes its binding to the 30S ribosomal subunits. Also involved in the hydrolysis of GTP during the formation of the 70S ribosomal complex. In Anaplasma marginale (strain St. Maries), this protein is Translation initiation factor IF-2.